Consider the following 459-residue polypeptide: Fe(3+)-Zn(2+) purple acid phosphatase (459 aa).

The signal sequence occupies residues 1–22 (MGVVKGLLALALVLNVVVVSNG). At G23 the chain carries Blocked amino end (Gly). Residue N108 is glycosylated (N-linked (GlcNAc...) asparagine; partial). N-linked (GlcNAc...) asparagine glycosylation is present at N136. Position 162 (D162) interacts with Fe cation. N-linked (GlcNAc...) asparagine glycosylation is present at N170. Residues D191 and Y194 each contribute to the Fe cation site. Residue D191 coordinates Zn(2+). N228 is a Zn(2+) binding site. Residue N238 is glycosylated (N-linked (GlcNAc...) asparagine). H313 serves as a coordination point for Zn(2+). H323 acts as the Proton donor in catalysis. A Zn(2+)-binding site is contributed by H350. H352 contributes to the Fe cation binding site. N423 carries N-linked (GlcNAc...) asparagine glycosylation.

It belongs to the metallophosphoesterase superfamily. Purple acid phosphatase family. Homodimer; disulfide-linked. Fe cation serves as cofactor. The cofactor is Zn(2+).

The protein resides in the secreted. It catalyses the reaction a phosphate monoester + H2O = an alcohol + phosphate. Its activity is regulated as follows. Inhibited by compounds CC24201, CC27209, and MO07123. Inhibited by the tetraoxoanions molybdate and phosphate. Not inhibited by EDTA or tartrate. This Phaseolus vulgaris (Kidney bean) protein is Fe(3+)-Zn(2+) purple acid phosphatase.